The sequence spans 374 residues: Guanine nucleotide-binding protein subunit alpha-15 (374 aa).

In terms of domain architecture, G-alpha spans 41-374 (GELKLLLLGT…ARYLDEINLL (334 aa)). Residues 44-57 (KLLLLGTGESGKST) form a G1 motif region. GTP-binding positions include 49 to 56 (GTGESGKS), 183 to 189 (LRSRMPT), 208 to 212 (DVGGQ), 277 to 280 (NKTD), and alanine 346. Mg(2+) contacts are provided by serine 56 and threonine 189. A G2 motif region spans residues 181–189 (DVLRSRMPT). Positions 204–213 (LRIVDVGGQK) are G3 motif. The G4 motif stretch occupies residues 273–280 (ILFLNKTD). A G5 motif region spans residues 344 to 349 (TCATDT).

Belongs to the G-alpha family. G(q) subfamily. In terms of assembly, g proteins are composed of 3 units; alpha, beta and gamma. The alpha chain contains the guanine nucleotide binding site.

In terms of biological role, guanine nucleotide-binding proteins (G proteins) are involved as modulators or transducers in various transmembrane signaling systems. The chain is Guanine nucleotide-binding protein subunit alpha-15 (GNA15) from Oryctolagus cuniculus (Rabbit).